Here is a 317-residue protein sequence, read N- to C-terminus: Acetyl-coenzyme A carboxylase carboxyl transferase subunit alpha (317 aa).

The CoA carboxyltransferase C-terminal domain maps to Arg39 to Glu293.

It belongs to the AccA family. In terms of assembly, acetyl-CoA carboxylase is a heterohexamer composed of biotin carboxyl carrier protein (AccB), biotin carboxylase (AccC) and two subunits each of ACCase subunit alpha (AccA) and ACCase subunit beta (AccD).

Its subcellular location is the cytoplasm. It catalyses the reaction N(6)-carboxybiotinyl-L-lysyl-[protein] + acetyl-CoA = N(6)-biotinyl-L-lysyl-[protein] + malonyl-CoA. The protein operates within lipid metabolism; malonyl-CoA biosynthesis; malonyl-CoA from acetyl-CoA: step 1/1. Component of the acetyl coenzyme A carboxylase (ACC) complex. First, biotin carboxylase catalyzes the carboxylation of biotin on its carrier protein (BCCP) and then the CO(2) group is transferred by the carboxyltransferase to acetyl-CoA to form malonyl-CoA. The chain is Acetyl-coenzyme A carboxylase carboxyl transferase subunit alpha from Neisseria gonorrhoeae (strain NCCP11945).